The following is a 430-amino-acid chain: RNA-binding protein 34 (430 aa).

3 disordered regions span residues Met-1–Arg-55, Val-72–Glu-123, and Glu-134–Ala-153. 3 positions are modified to phosphoserine: Ser-14, Ser-28, and Ser-99. The segment covering Asp-23–Arg-34 has biased composition (basic and acidic residues). The span at Thr-113 to Glu-123 shows a compositional bias: basic and acidic residues. An N6-acetyllysine modification is found at Lys-151. RRM domains lie at Arg-185 to Glu-280 and Arg-287 to Asn-364. A Glycyl lysine isopeptide (Lys-Gly) (interchain with G-Cter in SUMO2) cross-link involves residue Lys-242. Residue Ser-288 is modified to Phosphoserine. Disordered regions lie at residues Lys-365 to Glu-395 and Lys-411 to Lys-430.

It belongs to the RRM RBM34 family.

Its subcellular location is the nucleus. It localises to the nucleolus. This Homo sapiens (Human) protein is RNA-binding protein 34 (RBM34).